We begin with the raw amino-acid sequence, 311 residues long: Natural killer cell receptor 2B4 (311 aa).

The N-terminal stretch at 1-19 is a signal peptide; sequence MLQQTVLLSLFLLLRAHQG. Residues 20-223 lie on the Extracellular side of the membrane; that stretch reads QDCADSSEEV…CQSVPSKFNY (204 aa). Cysteines 22 and 118 form a disulfide. Ig-like domains lie at 22-128 and 131-215; these read CADS…LIFD and ETPH…QSCQ. N-linked (GlcNAc...) asparagine glycans are attached at residues N101, N144, N160, N183, N196, and N205. C153 and C195 are disulfide-bonded. A helical membrane pass occupies residues 224–247; sequence LPFMVSIGILVKFFHGAIDCFCVW. Residues 248–311 are Cytoplasmic-facing; sequence NRKRKQSQSI…RRLFQFINRS (64 aa). The disordered stretch occupies residues 275-301; sequence RDQRGHFRASGSSSDVRGDERGQRESD. Positions 290–301 are enriched in basic and acidic residues; the sequence is VRGDERGQRESD.

Interacts with CD48. Interacts (via phosphorylated ITSM 1-4) with SH2D1A (via SH2 domain); SH2D1A probably mediates association with FYN. Interacts (via phosphorylated ITSM 3) with PTPN11/SHP-2, INPP5D/SHIP1, PTPN6/SHP-1 and CSK; binding of SH2D1A/SAP prevents association with PTPN11, PTPN6 and CSK; conflictingly a similar association has been described for phosphorylated ITSM 1 also including GRB2 and PLCG1. Interacts weakly (via phosphorylated ITSM 2) with PTPN11/SHP-2 and CSK. Interacts with SH2D1B. Interacts with PIK3R1; PI3K recruits SH2D1A. Interacts with MHC class I proteins; the interaction is proposed to prevent self-killing of NK cells. N-linked glycosylation is essential for the binding to its ligand CD48. Also O-glycosylated, in contrast, O-linked sialylation has a negative impact on ligand binding. In terms of processing, phosphorylated by FYN and CSK on tyrosine residues following activation. Coligation with inhibitory receptors such as KIR2DL1 inhibits phosphorylation upon contact of NK cells with sensitive target cells.

The protein localises to the membrane. Its subcellular location is the cell membrane. It localises to the membrane raft. Heterophilic receptor of the signaling lymphocytic activation molecule (SLAM) family; its ligand is CD48. SLAM receptors triggered by homo- or heterotypic cell-cell interactions are modulating the activation and differentiation of a wide variety of immune cells and thus are involved in the regulation and interconnection of both innate and adaptive immune response. Activities are controlled by presence or absence of small cytoplasmic adapter proteins, SH2D1A/SAP and/or SH2D1B/EAT-2. Acts as activating natural killer (NK) cell receptor. Activating function implicates association with SH2D1A and FYN. Downstreaming signaling involves predominantly VAV1, and, to a lesser degree, INPP5D/SHIP1 and CBL. Signal attenuation in the absence of SH2D1A is proposed to be dependent on INPP5D and to a lesser extent PTPN6/SHP-1 and PTPN11/SHP-2. Stimulates NK cell cytotoxicity, production of IFN-gamma and granule exocytosis. Optimal expansion and activation of NK cells seems to be dependent on the engagement of CD244 with CD48 expressed on neighboring NK cells. Acts as costimulator in NK activation by enhancing signals by other NK receptors such as NCR3 and NCR1. At early stages of NK cell differentiation may function as an inhibitory receptor possibly ensuring the self-tolerance of developing NK cells. Involved in the regulation of CD8(+) T-cell proliferation; expression on activated T-cells and binding to CD48 provides costimulatory-like function for neighboring T-cells. Inhibits inflammatory responses in dendritic cells (DCs). The sequence is that of Natural killer cell receptor 2B4 (Cd244) from Rattus norvegicus (Rat).